We begin with the raw amino-acid sequence, 193 residues long: UMP-CMP kinase (193 aa).

ATP is bound at residue 13–18 (GAGKGT). The interval 33-63 (SAGDLLRDERKKPDSQYGELIESYIRDGKIV) is NMP. A ribonucleoside 5'-phosphate is bound by residues Arg39, 61–63 (KIV), and 93–96 (GFPR). Asn100 contributes to the CMP binding site. Residues 133–143 (ERGKSSGRSDD) form an LID region. Arg134 contacts ATP. A ribonucleoside 5'-phosphate-binding residues include Arg140 and Arg151. Residue Lys179 coordinates ATP.

Belongs to the adenylate kinase family. UMP-CMP kinase subfamily. In terms of assembly, monomer. Mg(2+) is required as a cofactor.

Its subcellular location is the nucleus. The protein localises to the cytoplasm. It catalyses the reaction CMP + ATP = CDP + ADP. The enzyme catalyses dCMP + ATP = dCDP + ADP. It carries out the reaction UMP + ATP = UDP + ADP. The catalysed reaction is a 2'-deoxyribonucleoside 5'-diphosphate + ATP = a 2'-deoxyribonucleoside 5'-triphosphate + ADP. It catalyses the reaction a ribonucleoside 5'-diphosphate + ATP = a ribonucleoside 5'-triphosphate + ADP. Its function is as follows. Catalyzes the phosphorylation of pyrimidine nucleoside monophosphates at the expense of ATP. Plays an important role in de novo pyrimidine nucleotide biosynthesis. Has preference for UMP and CMP as phosphate acceptors. Also displays broad nucleoside diphosphate kinase activity. The sequence is that of UMP-CMP kinase (cmpk1) from Xenopus laevis (African clawed frog).